We begin with the raw amino-acid sequence, 521 residues long: Medium/long-chain-fatty-acid--[acyl-carrier-protein] ligase MbtM (521 aa).

The protein belongs to the ATP-dependent AMP-binding enzyme family.

The catalysed reaction is a long-chain fatty acid + holo-[ACP] + ATP = a long-chain fatty acyl-[ACP] + AMP + diphosphate. The enzyme catalyses a medium-chain fatty acid + holo-[ACP] + ATP = a medium-chain fatty acyl-[ACP] + AMP + diphosphate. It participates in siderophore biosynthesis; mycobactin biosynthesis. Activates lipidic moieties required for mycobactin biosynthesis. Converts medium- to long-chain aliphatic fatty acids into acyl adenylate, which is further transferred on to the phosphopantetheine arm of the carrier protein MbtL. The chain is Medium/long-chain-fatty-acid--[acyl-carrier-protein] ligase MbtM (mbtM) from Mycobacterium tuberculosis (strain CDC 1551 / Oshkosh).